Reading from the N-terminus, the 479-residue chain is MSAAETGSEPSQGAGPSEATLHSLREAFNAGRTRPTEFRTAQLRSLGRFLQENKELLQDALAKDVGKSGFESDMSEIILCENEVDLALKNLQTWMKDEPVSTNLLTKLSSAFIRKEPFGLVLIIAPWNYPVNLMIIPLVGAIAAGNCVVLKPSEISKNTEKVLAELLPQYLDQSCFAVMLGGPEETRQLLEHKFDYIFFTGSPRVGKIVMTAAAKHLTPITLELGGKNPCYVDDNCDPQTVANRVAWFRYFNAGQTCVAPDYILCSQEMQERLVPALQNSITRFYGDNPQTSPNLGRIINQKHFKRLQGLLGCGRVAIGGQSDEGERYIAPTVLVDVQETEPVMQEEIFGPILPLVTVRSLDEAIEFINRREKPLALYAFSNNNQVVNQMLERTSSGGFGGNDGFLYLTLPALPLGGVGNSGMGRYHGKFSFDTFSHHRACLLRSPGMEKLNDLRYPPYGPWNQQLISWAIGSRSCTLL.

Residues Glu-223 and Cys-257 contribute to the active site. Cys-476 bears the Cysteine methyl ester mark. Residue Cys-476 is the site of S-geranylgeranyl cysteine attachment. The propeptide at 477-479 (TLL) is removed in mature form.

Belongs to the aldehyde dehydrogenase family. In terms of processing, geranylgeranylation is important for localization to lipid droplets and enzyme activity. As to expression, expressed in testis, white adipose tissue, lung, small intestine, kidney, spleen and liver.

The protein resides in the lipid droplet. The catalysed reaction is an aldehyde + NAD(+) + H2O = a carboxylate + NADH + 2 H(+). It catalyses the reaction a long-chain fatty aldehyde + NAD(+) + H2O = a long-chain fatty acid + NADH + 2 H(+). It carries out the reaction a medium-chain fatty aldehyde + NAD(+) + H2O = a medium-chain fatty acid + NADH + 2 H(+). The enzyme catalyses hexadecanoate + NADH + 2 H(+) = hexadecanal + NAD(+) + H2O. The catalysed reaction is octanal + NAD(+) + H2O = octanoate + NADH + 2 H(+). The protein operates within alcohol metabolism; ethanol degradation; acetate from ethanol: step 2/2. Functionally, oxidizes medium and long chain fatty aldehydes in lipid droplets into non-toxic fatty acids. This is Aldehyde dehydrogenase family 3 member B2 from Mus musculus (Mouse).